The sequence spans 1171 residues: ATP-dependent helicase/deoxyribonuclease subunit B (1171 aa).

The region spanning 1–343 is the UvrD-like helicase ATP-binding domain; that stretch reads MSLRFVIGRA…LVAEENYRYR (343 aa). 8–15 contributes to the ATP binding site; sequence GRAGSGKS. A UvrD-like helicase C-terminal domain is found at 281-587; that stretch reads MEQPRFHSPA…QFANIPPSLD (307 aa). [4Fe-4S] cluster is bound by residues cysteine 805, cysteine 1129, cysteine 1132, and cysteine 1138.

It belongs to the helicase family. AddB/RexB type 1 subfamily. Heterodimer of AddA and AddB. It depends on Mg(2+) as a cofactor. [4Fe-4S] cluster is required as a cofactor.

The heterodimer acts as both an ATP-dependent DNA helicase and an ATP-dependent, dual-direction single-stranded exonuclease. Recognizes the chi site generating a DNA molecule suitable for the initiation of homologous recombination. The AddB subunit has 5' -&gt; 3' nuclease activity but not helicase activity. The protein is ATP-dependent helicase/deoxyribonuclease subunit B of Bacillus thuringiensis (strain Al Hakam).